The chain runs to 212 residues: Holliday junction branch migration complex subunit RuvA (212 aa).

Positions Met-1 to Leu-66 are domain I. Positions Thr-67–Ser-145 are domain II. Residues Lys-146 to Ala-162 form a flexible linker region. The domain III stretch occupies residues Ala-163–Leu-212.

This sequence belongs to the RuvA family. As to quaternary structure, homotetramer. Forms an RuvA(8)-RuvB(12)-Holliday junction (HJ) complex. HJ DNA is sandwiched between 2 RuvA tetramers; dsDNA enters through RuvA and exits via RuvB. An RuvB hexamer assembles on each DNA strand where it exits the tetramer. Each RuvB hexamer is contacted by two RuvA subunits (via domain III) on 2 adjacent RuvB subunits; this complex drives branch migration. In the full resolvosome a probable DNA-RuvA(4)-RuvB(12)-RuvC(2) complex forms which resolves the HJ.

Its subcellular location is the cytoplasm. The RuvA-RuvB-RuvC complex processes Holliday junction (HJ) DNA during genetic recombination and DNA repair, while the RuvA-RuvB complex plays an important role in the rescue of blocked DNA replication forks via replication fork reversal (RFR). RuvA specifically binds to HJ cruciform DNA, conferring on it an open structure. The RuvB hexamer acts as an ATP-dependent pump, pulling dsDNA into and through the RuvAB complex. HJ branch migration allows RuvC to scan DNA until it finds its consensus sequence, where it cleaves and resolves the cruciform DNA. This chain is Holliday junction branch migration complex subunit RuvA, found in Leptospira borgpetersenii serovar Hardjo-bovis (strain JB197).